The chain runs to 269 residues: Surfeit locus protein 4 (269 aa).

A run of 5 helical transmembrane segments spans residues 64 to 84 (LLAS…CILV), 92 to 112 (YACF…SILW), 179 to 199 (FFSI…AIGF), 203 to 223 (LAAL…NAFW), and 239 to 259 (FFQT…GPGG). Residues 266–269 (KKEW) carry the Di-lysine motif motif.

This sequence belongs to the SURF4 family. Found in a complex composed at least of SURF4, TMED2 and TMED10. May interact with LMAN1. Interacts with ZFYVE27 and with KIF5A in a ZFYVE27-dependent manner. Interacts with STING1. Interacts with SAR1B. Interacts with TMEM41B.

Its subcellular location is the endoplasmic reticulum membrane. The protein resides in the endoplasmic reticulum-Golgi intermediate compartment membrane. It is found in the golgi apparatus membrane. Its function is as follows. Endoplasmic reticulum cargo receptor that mediates the export of lipoproteins by recruiting cargos into COPII vesicles to facilitate their secretion. Acts as a cargo receptor for lipoproteins bearing both APOB and APOA1, thereby regulating lipoprotein delivery and the maintenance of lipid homeostasis. Synergizes with the GTPase SAR1B to mediate transport of circulating lipoproteins. Promotes the secretion of PCSK9. Also mediates the efficient secretion of erythropoietin (EPO). May also play a role in the maintenance of the architecture of the endoplasmic reticulum-Golgi intermediate compartment and of the Golgi. This chain is Surfeit locus protein 4, found in Bos taurus (Bovine).